The primary structure comprises 371 residues: 4-hydroxy-3-methylbut-2-en-1-yl diphosphate synthase (flavodoxin) (371 aa).

[4Fe-4S] cluster-binding residues include Cys-270, Cys-273, Cys-305, and Glu-312.

The protein belongs to the IspG family. It depends on [4Fe-4S] cluster as a cofactor.

The enzyme catalyses (2E)-4-hydroxy-3-methylbut-2-enyl diphosphate + oxidized [flavodoxin] + H2O + 2 H(+) = 2-C-methyl-D-erythritol 2,4-cyclic diphosphate + reduced [flavodoxin]. The protein operates within isoprenoid biosynthesis; isopentenyl diphosphate biosynthesis via DXP pathway; isopentenyl diphosphate from 1-deoxy-D-xylulose 5-phosphate: step 5/6. Its function is as follows. Converts 2C-methyl-D-erythritol 2,4-cyclodiphosphate (ME-2,4cPP) into 1-hydroxy-2-methyl-2-(E)-butenyl 4-diphosphate. The protein is 4-hydroxy-3-methylbut-2-en-1-yl diphosphate synthase (flavodoxin) of Shewanella woodyi (strain ATCC 51908 / MS32).